The following is a 473-amino-acid chain: DNA (cytosine-5)-methyltransferase DRM1A (473 aa).

Residues Ser20–Tyr61 form the UBA 1 domain. Residues Glu84–Asp101 show a composition bias toward acidic residues. The disordered stretch occupies residues Glu84–Glu115. The UBA 2 domain maps to Glu120–Glu140. Residues Val204–Ile431 form the SAM-dependent MTase DRM-type domain.

It belongs to the class I-like SAM-binding methyltransferase superfamily. DRM-methyltransferase family.

It is found in the nucleus. The catalysed reaction is a 2'-deoxycytidine in DNA + S-adenosyl-L-methionine = a 5-methyl-2'-deoxycytidine in DNA + S-adenosyl-L-homocysteine + H(+). In terms of biological role, involved in de novo DNA methylation. Involved in RNA-directed DNA methylation (RdDM). In Oryza sativa subsp. japonica (Rice), this protein is DNA (cytosine-5)-methyltransferase DRM1A.